Reading from the N-terminus, the 413-residue chain is Queuine tRNA-ribosyltransferase accessory subunit 2 (413 aa).

Positions 298–321 are disordered; sequence LEKSETSGAERNGDVGAESEEPDA. Positions 349, 351, 354, and 380 each coordinate Zn(2+).

It belongs to the queuine tRNA-ribosyltransferase family. QTRT2 subfamily. Heterodimer of a catalytic subunit qtrt1 and an accessory subunit qtrt2. Requires Zn(2+) as cofactor.

It is found in the cytoplasm. It localises to the mitochondrion outer membrane. Its function is as follows. Non-catalytic subunit of the queuine tRNA-ribosyltransferase (TGT) that catalyzes the base-exchange of a guanine (G) residue with queuine (Q) at position 34 (anticodon wobble position) in tRNAs with GU(N) anticodons (tRNA-Asp, -Asn, -His and -Tyr), resulting in the hypermodified nucleoside queuosine (7-(((4,5-cis-dihydroxy-2-cyclopenten-1-yl)amino)methyl)-7-deazaguanosine). This chain is Queuine tRNA-ribosyltransferase accessory subunit 2, found in Xenopus tropicalis (Western clawed frog).